Reading from the N-terminus, the 82-residue chain is Small ribosomal subunit protein uS15 (82 aa).

It belongs to the universal ribosomal protein uS15 family. Part of the 30S ribosomal subunit. Forms a bridge to the 50S subunit in the 70S ribosome, contacting the 23S rRNA.

In terms of biological role, one of the primary rRNA binding proteins, it binds directly to 16S rRNA where it helps nucleate assembly of the platform of the 30S subunit by binding and bridging several RNA helices of the 16S rRNA. Its function is as follows. Forms an intersubunit bridge (bridge B4) with the 23S rRNA of the 50S subunit in the ribosome. In Pelagibacter ubique (strain HTCC1062), this protein is Small ribosomal subunit protein uS15.